The primary structure comprises 502 residues: Probable cytochrome P450 514A4 (502 aa).

Residues 4 to 24 (IFTIILTITILVLSLILKDLL) form a helical membrane-spanning segment. Residue Cys448 participates in heme binding.

It belongs to the cytochrome P450 family. Requires heme as cofactor.

It is found in the membrane. This is Probable cytochrome P450 514A4 (cyp514A4) from Dictyostelium discoideum (Social amoeba).